We begin with the raw amino-acid sequence, 127 residues long: Membrane-bound lysozyme inhibitor of C-type lysozyme (127 aa).

The signal sequence occupies residues 1 to 18; it reads MKKALWLLLAAVPVVLVA. Residue cysteine 19 is the site of N-palmitoyl cysteine attachment. Cysteine 19 is lipidated: S-diacylglycerol cysteine. A disulfide bridge links cysteine 51 with cysteine 124.

It belongs to the MliC family. Type 2 subfamily. Homodimer.

The protein localises to the cell outer membrane. In terms of biological role, specifically inhibits C-type lysozymes. This Pseudomonas aeruginosa (strain ATCC 15692 / DSM 22644 / CIP 104116 / JCM 14847 / LMG 12228 / 1C / PRS 101 / PAO1) protein is Membrane-bound lysozyme inhibitor of C-type lysozyme.